The sequence spans 129 residues: M-zodatoxin-Lt8i (129 aa).

A signal peptide spans 1–20 (MKYFVVALALVAAFACIAES). A propeptide spanning residues 21–60 (KPAESEHELAEVEEENELADLEDAVWLEHLADLSDLEEAR) is cleaved from the precursor.

Belongs to the cationic peptide 06 (cytoinsectotoxin) family. In terms of tissue distribution, expressed by the venom gland.

It localises to the secreted. Functionally, insecticidal, cytolytic and antimicrobial peptide. Forms voltage-dependent, ion-permeable channels in membranes. At high concentration causes cell membrane lysis. The polypeptide is M-zodatoxin-Lt8i (cit 1-6) (Lachesana tarabaevi (Spider)).